A 425-amino-acid polypeptide reads, in one-letter code: Enolase (425 aa).

(2R)-2-phosphoglycerate is bound at residue Q163. E205 acts as the Proton donor in catalysis. D242, E285, and D312 together coordinate Mg(2+). Positions 337, 366, 367, and 388 each coordinate (2R)-2-phosphoglycerate. Residue K337 is the Proton acceptor of the active site.

Belongs to the enolase family. It depends on Mg(2+) as a cofactor.

It is found in the cytoplasm. The protein localises to the secreted. It localises to the cell surface. The catalysed reaction is (2R)-2-phosphoglycerate = phosphoenolpyruvate + H2O. Its pathway is carbohydrate degradation; glycolysis; pyruvate from D-glyceraldehyde 3-phosphate: step 4/5. In terms of biological role, catalyzes the reversible conversion of 2-phosphoglycerate (2-PG) into phosphoenolpyruvate (PEP). It is essential for the degradation of carbohydrates via glycolysis. The protein is Enolase of Ruegeria pomeroyi (strain ATCC 700808 / DSM 15171 / DSS-3) (Silicibacter pomeroyi).